A 614-amino-acid polypeptide reads, in one-letter code: Zinc metalloproteinase-disintegrin-like HR1b (614 aa).

The signal sequence occupies residues methionine 1 to serine 20. A propeptide spanning residues isoleucine 21–glutamate 191 is cleaved from the precursor. Glutamine 192 carries the pyrrolidone carboxylic acid modification. In terms of domain architecture, Peptidase M12B spans arginine 198–proline 394. A glycan (N-linked (GlcNAc...) asparagine) is linked at asparagine 264. Disulfide bonds link cysteine 309–cysteine 389, cysteine 349–cysteine 373, and cysteine 351–cysteine 356. Histidine 334 is a binding site for Zn(2+). The active site involves glutamate 335. Residues histidine 338 and histidine 344 each coordinate Zn(2+). Residue asparagine 372 is glycosylated (N-linked (GlcNAc...) asparagine). The propeptide occupies serine 395 to aspartate 398. In terms of domain architecture, Disintegrin spans proline 402–asparagine 488. Positions 404, 407, 409, 411, 414, and 417 each coordinate Ca(2+). 22 disulfides stabilise this stretch: cysteine 405–cysteine 424, cysteine 405–cysteine 434, cysteine 416–cysteine 429, cysteine 416–cysteine 434, cysteine 418–cysteine 424, cysteine 428–cysteine 451, cysteine 442–cysteine 448, cysteine 447–cysteine 473, cysteine 460–cysteine 480, cysteine 467–cysteine 492, cysteine 467–cysteine 499, cysteine 492–cysteine 504, cysteine 499–cysteine 504, cysteine 511–cysteine 526, cysteine 511–cysteine 561, cysteine 526–cysteine 568, cysteine 539–cysteine 549, cysteine 549–cysteine 556, cysteine 556–cysteine 593, cysteine 561–cysteine 568, cysteine 587–cysteine 598, and cysteine 593–cysteine 598. A D/ECD-tripeptide motif is present at residues glutamate 466 to aspartate 468. The N-linked (GlcNAc...) asparagine glycan is linked to asparagine 518. N-linked (GlcNAc...) asparagine glycosylation is present at asparagine 571. A propeptide spanning residues threonine 608–isoleucine 614 is cleaved from the precursor.

This sequence belongs to the venom metalloproteinase (M12B) family. P-III subfamily. P-IIIb sub-subfamily. In terms of assembly, monomer. It depends on Zn(2+) as a cofactor. As to expression, expressed by the venom gland.

Its subcellular location is the secreted. In terms of biological role, zinc protease that induces hemorrhage. Has preference for Tyr, Leu, Arg, Met, and Phe at the P1 position, in descending order (in vitro). Shows equal preference for the sequences of Ala-Asp and Arg-Ile at the P3-P2 position with different enzyme cleavage sites across the P1 position: the N-terminus side for Ala-Asp and the C-terminus side for Arg-Ile. Inhibits platelet aggregation induced by ADP, thrombin, platelet-activating factor and collagen. Acts by inhibiting fibrinogen interaction with platelet receptors alpha-IIb/beta-3 (ITGA2B/ITGB3). The polypeptide is Zinc metalloproteinase-disintegrin-like HR1b (Protobothrops flavoviridis (Habu)).